Reading from the N-terminus, the 72-residue chain is Translation initiation factor IF-1 (72 aa).

One can recognise an S1-like domain in the interval 1–72 (MSKDDVIEMQ…SRGRITWRAK (72 aa)).

Belongs to the IF-1 family. Component of the 30S ribosomal translation pre-initiation complex which assembles on the 30S ribosome in the order IF-2 and IF-3, IF-1 and N-formylmethionyl-tRNA(fMet); mRNA recruitment can occur at any time during PIC assembly.

It localises to the cytoplasm. Functionally, one of the essential components for the initiation of protein synthesis. Stabilizes the binding of IF-2 and IF-3 on the 30S subunit to which N-formylmethionyl-tRNA(fMet) subsequently binds. Helps modulate mRNA selection, yielding the 30S pre-initiation complex (PIC). Upon addition of the 50S ribosomal subunit IF-1, IF-2 and IF-3 are released leaving the mature 70S translation initiation complex. The polypeptide is Translation initiation factor IF-1 (Clostridium novyi (strain NT)).